The chain runs to 142 residues: Phosphoribosyl-AMP cyclohydrolase (142 aa).

Residue Asp92 coordinates Mg(2+). Cys93 contributes to the Zn(2+) binding site. Residues Asp94 and Asp96 each contribute to the Mg(2+) site. 2 residues coordinate Zn(2+): Cys109 and Cys116.

It belongs to the PRA-CH family. In terms of assembly, homodimer. The cofactor is Mg(2+). Zn(2+) is required as a cofactor.

The protein resides in the cytoplasm. The enzyme catalyses 1-(5-phospho-beta-D-ribosyl)-5'-AMP + H2O = 1-(5-phospho-beta-D-ribosyl)-5-[(5-phospho-beta-D-ribosylamino)methylideneamino]imidazole-4-carboxamide. It functions in the pathway amino-acid biosynthesis; L-histidine biosynthesis; L-histidine from 5-phospho-alpha-D-ribose 1-diphosphate: step 3/9. Functionally, catalyzes the hydrolysis of the adenine ring of phosphoribosyl-AMP. The protein is Phosphoribosyl-AMP cyclohydrolase of Halorhodospira halophila (strain DSM 244 / SL1) (Ectothiorhodospira halophila (strain DSM 244 / SL1)).